The following is a 540-amino-acid chain: Isocitrate lyase (540 aa).

Residue 103–105 participates in substrate binding; sequence SGW. Residue Asp-187 coordinates Mg(2+). Cys-225 functions as the Proton acceptor in the catalytic mechanism. Residues 226-227, 385-389, and Thr-458 each bind substrate; these read GH and NNSPS.

This sequence belongs to the isocitrate lyase/PEP mutase superfamily. Isocitrate lyase family. As to quaternary structure, homotetramer. Requires Mg(2+) as cofactor.

The enzyme catalyses D-threo-isocitrate = glyoxylate + succinate. It functions in the pathway carbohydrate metabolism; glyoxylate cycle; (S)-malate from isocitrate: step 1/2. The protein operates within one-carbon metabolism; formaldehyde assimilation via serine pathway. Its activity is regulated as follows. In the presence of magnesium, inhibited by oxalate, potassium cyanide, manganese, silver, cadmium and to a lesser extent by succinate, glycolate, iodoacetamide, DL-penicillamine, aluminum, sodium, potassium, lithium and strontium. Functionally, involved in the metabolic adaptation in response to environmental changes. Catalyzes the reversible formation of succinate and glyoxylate from isocitrate, a key step of the glyoxylate cycle, which operates as an anaplerotic route for replenishing the tricarboxylic acid cycle during growth on fatty acid substrates. May be involved in the assimilation of one-carbon compounds via the isocitrate lyase-positive serine pathway. This Hyphomicrobium methylovorum protein is Isocitrate lyase.